The sequence spans 372 residues: F-box/kelch-repeat protein At5g48990 (372 aa).

The F-box domain maps to 14 to 60 (SSPNPSLPEDLIVSILARVSRSYYTNLSVVSKTFRSILTSPELYKTR). A Kelch repeat occupies 176 to 222 (RTYFPGSSEKPDSLNCVEVYNTNTQTWNPVPPQKRKLKFGNMEGKIY).

The chain is F-box/kelch-repeat protein At5g48990 from Arabidopsis thaliana (Mouse-ear cress).